Reading from the N-terminus, the 1290-residue chain is Alpha-factor-transporting ATPase (1290 aa).

Topologically, residues 1 to 25 are cytoplasmic; that stretch reads MNFLSFKTTKHYHIFRYVNIRNDYR. The chain crosses the membrane as a helical span at residues 26-46; it reads LLMIMIIGTVATGLVPAITSI. The region spanning 27-319 is the ABC transmembrane type-1 1 domain; the sequence is LMIMIIGTVA…TLHQIVVLQK (293 aa). The Extracellular portion of the chain corresponds to 47–75; it reads LTGRVFDLLSVFVANGSHQGLYSQLVQRS. N-linked (GlcNAc...) asparagine glycosylation occurs at N61. Residues 76–96 form a helical membrane-spanning segment; sequence MAVMALGAASVPVMWLSLTSW. Residues 97–150 lie on the Cytoplasmic side of the membrane; that stretch reads MHIGERQGFRIRSQILEAYLEEKPMEWYDNNEKLLGDFTQINRCVEELRSSSAE. A helical transmembrane segment spans residues 151 to 171; sequence ASAITFQNLVAICALLGTSFY. The Extracellular segment spans residues 172–173; that stretch reads YS. A helical transmembrane segment spans residues 174–194; it reads WSLTLIILCSSPIITFFAVVF. Over 195-262 the chain is Cytoplasmic; sequence SRMIHVYSEK…SCFFVAANAG (68 aa). Residues 263 to 283 traverse the membrane as a helical segment; it reads ILRFLTLTMFVQGFWFGSAMI. Residues 284–296 lie on the Extracellular side of the membrane; it reads KKGKLNINDVITC. Residues 297–317 form a helical membrane-spanning segment; sequence FHSCIMLGSTLNNTLHQIVVL. At 318 to 715 the chain is on the cytoplasmic side; that stretch reads QKGGVAMEKI…RMIKSIRYKK (398 aa). An ABC transporter 1 domain is found at 357-603; sequence LTFANVSFSY…PTTTFSTWYH (247 aa). Position 392–399 (392–399) interacts with ATP; the sequence is GKSGSGKS. Residues 716 to 736 traverse the membrane as a helical segment; the sequence is ILILGLLCSLIAGATNPVFSY. The ABC transmembrane type-1 2 domain maps to 717–1007; that stretch reads LILGLLCSLI…LVSQIPDISR (291 aa). At 737–763 the chain is on the extracellular side; it reads TFSFLLEGIVPSTDGKTGSSHYLAKWS. The chain crosses the membrane as a helical span at residues 764 to 784; that stretch reads LLVLGVAAADGIFNFAKGFLL. At 785-838 the chain is on the cytoplasmic side; it reads DCCSEYWVMDLRNEVMEKLTRKNMDWFSGENNKASEISALVLNDLRDLRSLVSE. The helical transmembrane segment at 839 to 859 threads the bilayer; the sequence is FLSAMTSFVTVSTIGLIWALV. At 860–865 the chain is on the extracellular side; that stretch reads SGWKLS. The chain crosses the membrane as a helical span at residues 866–886; the sequence is LVCISMFPLIIIFSAIYGGIL. The Cytoplasmic segment spans residues 887–945; that stretch reads QKCETDYKTSVAQLENCLYQIVTNIKTIKCLQAEFHFQLTYHDLKIKMQQIASKRAIAT. A helical membrane pass occupies residues 946 to 966; that stretch reads GFGISMTNMIVMCIQAIIYYY. Over 967–981 the chain is Extracellular; it reads GLKLVMIHEYTSKEM. Residues 982-1002 form a helical membrane-spanning segment; the sequence is FTTFTLLLFTIMSCTSLVSQI. Topologically, residues 1003–1290 are cytoplasmic; it reads PDISRGQRAA…LFQIVSNQSS (288 aa). A Glycyl lysine isopeptide (Lys-Gly) (interchain with G-Cter in ubiquitin) cross-link involves residue K1022. The ABC transporter 2 domain occupies 1052–1287; that stretch reads VSIQNLTFAY…RGELFQIVSN (236 aa). Residue 1087 to 1094 coordinates ATP; it reads GESGTGKS.

It belongs to the ABC transporter superfamily. Alpha-factor sex pheromone exporter (TC 3.A.1.206) family. In terms of processing, degraded via the ubiquitin system.

The protein localises to the membrane. The enzyme catalyses an [alpha-factor](in) + ATP + H2O = an [alpha-factor](out) + ADP + phosphate + H(+). Its function is as follows. STE6 is required in yeast MATA cells for production of A-factor pheromone. STE6 is involved in the transport of the farnesyl-derivation of the A-factor pheromone. In Saccharomyces cerevisiae (strain ATCC 204508 / S288c) (Baker's yeast), this protein is Alpha-factor-transporting ATPase (STE6).